Reading from the N-terminus, the 487-residue chain is Glutamyl-tRNA(Gln) amidotransferase subunit A (487 aa).

Active-site charge relay system residues include K80 and S155. Catalysis depends on S179, which acts as the Acyl-ester intermediate.

The protein belongs to the amidase family. GatA subfamily. Heterotrimer of A, B and C subunits.

The enzyme catalyses L-glutamyl-tRNA(Gln) + L-glutamine + ATP + H2O = L-glutaminyl-tRNA(Gln) + L-glutamate + ADP + phosphate + H(+). Functionally, allows the formation of correctly charged Gln-tRNA(Gln) through the transamidation of misacylated Glu-tRNA(Gln) in organisms which lack glutaminyl-tRNA synthetase. The reaction takes place in the presence of glutamine and ATP through an activated gamma-phospho-Glu-tRNA(Gln). The polypeptide is Glutamyl-tRNA(Gln) amidotransferase subunit A (Leptospira interrogans serogroup Icterohaemorrhagiae serovar Lai (strain 56601)).